Reading from the N-terminus, the 657-residue chain is Threonine--tRNA ligase (657 aa).

Residues 7-70 enclose the TGS domain; it reads ILAVIALTLP…TADAAIEIIT (64 aa). A catalytic region spans residues 253 to 555; sequence DHRKLGAELE…LIEHTAGNFP (303 aa). Positions 351, 402, and 532 each coordinate Zn(2+).

It belongs to the class-II aminoacyl-tRNA synthetase family. In terms of assembly, homodimer. It depends on Zn(2+) as a cofactor.

The protein localises to the cytoplasm. It catalyses the reaction tRNA(Thr) + L-threonine + ATP = L-threonyl-tRNA(Thr) + AMP + diphosphate + H(+). In terms of biological role, catalyzes the attachment of threonine to tRNA(Thr) in a two-step reaction: L-threonine is first activated by ATP to form Thr-AMP and then transferred to the acceptor end of tRNA(Thr). Also edits incorrectly charged L-seryl-tRNA(Thr). The sequence is that of Threonine--tRNA ligase from Pelodictyon phaeoclathratiforme (strain DSM 5477 / BU-1).